A 150-amino-acid polypeptide reads, in one-letter code: C-type lectin 37Db (150 aa).

The N-terminal stretch at 1–20 (MMVKLLLLFLVCWSALPLES) is a signal peptide. Residues 31-148 (IGEKQYYISL…CYSSVAFICQ (118 aa)) enclose the C-type lectin domain. 2 disulfide bridges follow: cysteine 52–cysteine 147 and cysteine 122–cysteine 139. Residues asparagine 107 and asparagine 115 are each glycosylated (N-linked (GlcNAc...) asparagine).

The protein resides in the secreted. In terms of biological role, galactose-specific lectin that displays calcium-dependent activity. Binds to the surface of hemocytes and enhances hemocyte encapsulation and melanization. This is likely by interacting with carbohydrates on the surface of the hemocytes. Also displays agglutination activity against the Gram-negative bacterium E.coli. The sequence is that of C-type lectin 37Db from Drosophila melanogaster (Fruit fly).